The sequence spans 54 residues: Zinc-containing ferredoxin A (54 aa).

Residues 1-21 form a disordered region; sequence GIDPNYRTSRPEVGTHEGHKV. An N-terminal extension region spans residues 1–36; sequence GIDPNYRTSRPEVGTHEGHKVYGPVENPKVLGIHGA. Residues 9–20 are compositionally biased toward basic and acidic residues; it reads SRPEVGTHEGHK. 2 residues coordinate Zn(2+): His-16 and His-19. Residue Lys-29 is modified to N6-methyllysine. His-34 is a binding site for Zn(2+). Positions 35–54 constitute a 4Fe-4S ferredoxin-type 1 domain; that stretch reads GAIVGVDFDLCIADGSCINA. Residues Cys-45 and Cys-51 each contribute to the [3Fe-4S] cluster site.

Requires [3Fe-4S] cluster as cofactor. It depends on [4Fe-4S] cluster as a cofactor. Zn(2+) is required as a cofactor.

In terms of biological role, ferredoxins are iron-sulfur proteins that transfer electrons in a wide variety of metabolic reactions. This is Zinc-containing ferredoxin A (zfx) from Sulfuracidifex metallicus (Sulfolobus metallicus).